Reading from the N-terminus, the 478-residue chain is PTS system mannitol-specific EIICB component (478 aa).

The Cytoplasmic portion of the chain corresponds to 1-29 (MQQQEQQQGGMKVKVQRFGSYLSGMIMPN). A PTS EIIC type-2 domain is found at 18–347 (FGSYLSGMIM…VILKSSKASE (330 aa)). Residues 30–51 (IGAFIAWGIITALFIPAGWFPN) traverse the membrane as a helical segment. The Extracellular segment spans residues 52-55 (EQLN). Residues 56 to 76 (TLVSPMITYLLPLLIAYTGGK) form a helical membrane-spanning segment. Over 77–139 (MIYDHRGGVV…QGFEMLINNF (63 aa)) the chain is Cytoplasmic. Residues 140 to 161 (TAGIVGAALTILAFYAIGPVVL) traverse the membrane as a helical segment. Residues 162–170 (TLNKLLAAG) are Extracellular-facing. A helical membrane pass occupies residues 171–191 (VEVIVHANLLPVASVFVEPAK). Residues 192–278 (VLFLNNAINH…ILMKPALILA (87 aa)) are Cytoplasmic-facing. Residues 279 to 298 (AIAGGASGLLTFTIFNAGLV) traverse the membrane as a helical segment. Residues 299–318 (AAASPGSIIALMAMTPRGGY) lie on the Extracellular side of the membrane. Residues 319 to 340 (FGVLAGVLVAAAVSFIVSAVIL) form a helical membrane-spanning segment. Topologically, residues 341 to 478 (KSSKASEEDL…YDELIEKLKK (138 aa)) are cytoplasmic. Residues 390–478 (NKIIFACDAG…YDELIEKLKK (89 aa)) form the PTS EIIB type-2 domain. Cys396 (phosphocysteine intermediate; for EIIB activity) is an active-site residue. The residue at position 396 (Cys396) is a Phosphocysteine; by EIIA.

In terms of assembly, homodimer.

It localises to the cell membrane. It carries out the reaction D-mannitol(out) + N(pros)-phospho-L-histidyl-[protein] = D-mannitol 1-phosphate(in) + L-histidyl-[protein]. The phosphoenolpyruvate-dependent sugar phosphotransferase system (sugar PTS), a major carbohydrate active transport system, catalyzes the phosphorylation of incoming sugar substrates concomitantly with their translocation across the cell membrane. The enzyme II CmtAB PTS system is involved in D-mannitol transport. The sequence is that of PTS system mannitol-specific EIICB component from Bacillus subtilis (strain 168).